The chain runs to 620 residues: Probable indole-3-acetic acid-amido synthetase GH3.7 (620 aa).

This sequence belongs to the IAA-amido conjugating enzyme family. As to expression, ubiquitous.

In terms of biological role, may catalyze the synthesis of indole-3-acetic acid (IAA)-amino acid conjugates, providing a mechanism for the plant to cope with the presence of excess auxin. This chain is Probable indole-3-acetic acid-amido synthetase GH3.7 (GH3.7), found in Oryza sativa subsp. japonica (Rice).